Here is a 130-residue protein sequence, read N- to C-terminus: Phosphoribosyl-ATP pyrophosphatase (130 aa).

Belongs to the PRA-PH family.

The protein resides in the cytoplasm. It carries out the reaction 1-(5-phospho-beta-D-ribosyl)-ATP + H2O = 1-(5-phospho-beta-D-ribosyl)-5'-AMP + diphosphate + H(+). It functions in the pathway amino-acid biosynthesis; L-histidine biosynthesis; L-histidine from 5-phospho-alpha-D-ribose 1-diphosphate: step 2/9. This chain is Phosphoribosyl-ATP pyrophosphatase, found in Albidiferax ferrireducens (strain ATCC BAA-621 / DSM 15236 / T118) (Rhodoferax ferrireducens).